Consider the following 312-residue polypeptide: Expansin-A24 (312 aa).

Residues 1-27 (MELLKRKLYAKILMMVMVIWIAPMTNG) form the signal peptide. Positions 31 to 86 (ASHVPGGRPGAHPSHGAHPAHGAHPSHGAHPSHGAHPSHGAHPSHGALPSHGGQVP) are disordered. The segment covering 40-77 (GAHPSHGAHPAHGAHPSHGAHPSHGAHPSHGAHPSHGA) has biased composition (low complexity). Repeat copies occupy residues 42 to 47 (HPSHGA), 48 to 53 (HPAHGA), 54 to 59 (HPSHGA), 60 to 65 (HPSHGA), 66 to 71 (HPSHGA), and 72 to 77 (HPSHGA). A 6 X 6 AA tandem repeats of H-P-S-H-G-A region spans residues 42–77 (HPSHGAHPAHGAHPSHGAHPSHGAHPSHGAHPSHGA). In terms of domain architecture, Expansin-like EG45 spans 108–218 (QGACGYGDLH…RRVPCAKIGG (111 aa)). The Expansin-like CBD domain occupies 228 to 307 (HFLMILPYNV…DWKCNGQSFD (80 aa)).

This sequence belongs to the expansin family. Expansin A subfamily.

The protein resides in the secreted. It is found in the cell wall. It localises to the membrane. Its function is as follows. Causes loosening and extension of plant cell walls by disrupting non-covalent bonding between cellulose microfibrils and matrix glucans. No enzymatic activity has been found. This is Expansin-A24 (EXPA24) from Arabidopsis thaliana (Mouse-ear cress).